The following is a 372-amino-acid chain: Queuine tRNA-ribosyltransferase (372 aa).

The active-site Proton acceptor is the aspartate 92. Residues 92–96, aspartate 146, glutamine 188, and glycine 215 each bind substrate; that span reads DSGGY. The tract at residues 246 to 252 is RNA binding; that stretch reads GIGSLRE. Aspartate 265 (nucleophile) is an active-site residue. The segment at 270 to 274 is RNA binding; important for wobble base 34 recognition; that stretch reads TRLGR. Zn(2+) contacts are provided by cysteine 303, cysteine 305, cysteine 308, and histidine 334.

This sequence belongs to the queuine tRNA-ribosyltransferase family. Homodimer. Within each dimer, one monomer is responsible for RNA recognition and catalysis, while the other monomer binds to the replacement base PreQ1. Zn(2+) serves as cofactor.

It catalyses the reaction 7-aminomethyl-7-carbaguanine + guanosine(34) in tRNA = 7-aminomethyl-7-carbaguanosine(34) in tRNA + guanine. Its pathway is tRNA modification; tRNA-queuosine biosynthesis. Its function is as follows. Catalyzes the base-exchange of a guanine (G) residue with the queuine precursor 7-aminomethyl-7-deazaguanine (PreQ1) at position 34 (anticodon wobble position) in tRNAs with GU(N) anticodons (tRNA-Asp, -Asn, -His and -Tyr). Catalysis occurs through a double-displacement mechanism. The nucleophile active site attacks the C1' of nucleotide 34 to detach the guanine base from the RNA, forming a covalent enzyme-RNA intermediate. The proton acceptor active site deprotonates the incoming PreQ1, allowing a nucleophilic attack on the C1' of the ribose to form the product. After dissociation, two additional enzymatic reactions on the tRNA convert PreQ1 to queuine (Q), resulting in the hypermodified nucleoside queuosine (7-(((4,5-cis-dihydroxy-2-cyclopenten-1-yl)amino)methyl)-7-deazaguanosine). This chain is Queuine tRNA-ribosyltransferase, found in Prochlorococcus marinus (strain MIT 9312).